Here is an 843-residue protein sequence, read N- to C-terminus: Translation initiation factor IF-2 (843 aa).

Positions 94-259 (QRSPEEIEAE…AHGFQSPTGP (166 aa)) are disordered. The segment covering 96–135 (SPEEIEAERKREMDERRAVENAARQKAEEEAKRRAEEDAR) has biased composition (basic and acidic residues). The segment covering 136 to 177 (NQPAAGQPASAPAQPVAAAEPVREAPAPAAAAPAPASAAPSA) has biased composition (low complexity). 2 stretches are compositionally biased toward basic and acidic residues: residues 178–219 (DARK…EKAP) and 227–236 (TTDEESDSFR). Positions 237–250 (RGGRGKSRLKKRNA) are enriched in basic residues. A tr-type G domain is found at 343-512 (SRAPVVTVMG…LLQAEVLELK (170 aa)). A G1 region spans residues 352 to 359 (GHVDHGKT). Residue 352-359 (GHVDHGKT) participates in GTP binding. The segment at 377–381 (GITQH) is G2. The segment at 398–401 (DTPG) is G3. GTP contacts are provided by residues 398 to 402 (DTPGH) and 452 to 455 (NKID). The G4 stretch occupies residues 452–455 (NKID). The tract at residues 488 to 490 (SAK) is G5.

It belongs to the TRAFAC class translation factor GTPase superfamily. Classic translation factor GTPase family. IF-2 subfamily.

The protein resides in the cytoplasm. One of the essential components for the initiation of protein synthesis. Protects formylmethionyl-tRNA from spontaneous hydrolysis and promotes its binding to the 30S ribosomal subunits. Also involved in the hydrolysis of GTP during the formation of the 70S ribosomal complex. The chain is Translation initiation factor IF-2 from Pseudomonas savastanoi pv. phaseolicola (strain 1448A / Race 6) (Pseudomonas syringae pv. phaseolicola (strain 1448A / Race 6)).